Reading from the N-terminus, the 243-residue chain is Hydroxyacylglutathione hydrolase (243 aa).

Positions 52, 54, 56, 57, 108, 125, and 163 each coordinate Zn(2+).

It belongs to the metallo-beta-lactamase superfamily. Glyoxalase II family. As to quaternary structure, monomer. Zn(2+) is required as a cofactor.

It carries out the reaction an S-(2-hydroxyacyl)glutathione + H2O = a 2-hydroxy carboxylate + glutathione + H(+). Its pathway is secondary metabolite metabolism; methylglyoxal degradation; (R)-lactate from methylglyoxal: step 2/2. Functionally, thiolesterase that catalyzes the hydrolysis of S-D-lactoyl-glutathione to form glutathione and D-lactic acid. This chain is Hydroxyacylglutathione hydrolase, found in Haemophilus influenzae (strain PittGG).